The chain runs to 262 residues: Snake venom serine proteinase 1 (262 aa).

The N-terminal stretch at 1-18 is a signal peptide; that stretch reads MVLIRVLANLLILQLSYA. Positions 19 to 24 are excised as a propeptide; it reads QKSSEL. One can recognise a Peptidase S1 domain in the interval 25-253; sequence VIGGDECNIN…HLDWIQSIIA (229 aa). Disulfide bonds link cysteine 31-cysteine 165, cysteine 52-cysteine 68, cysteine 144-cysteine 214, cysteine 176-cysteine 193, and cysteine 204-cysteine 229. The active-site Charge relay system is the histidine 67. Asparagine 105 carries an N-linked (GlcNAc...) asparagine glycan. Aspartate 112 acts as the Charge relay system in catalysis. The Charge relay system role is filled by serine 208.

It belongs to the peptidase S1 family. Snake venom subfamily. As to quaternary structure, monomer. In terms of tissue distribution, expressed by the venom gland.

The protein localises to the secreted. Functionally, snake venom serine protease that may act in the hemostasis system of the prey. The polypeptide is Snake venom serine proteinase 1 (Crotalus adamanteus (Eastern diamondback rattlesnake)).